The primary structure comprises 655 residues: p-hydroxybenzoic acid efflux pump subunit AaeB (655 aa).

Residues 1–12 are Periplasmic-facing; sequence MGIFSIANQHIR. The helical transmembrane segment at 13–33 threads the bilayer; the sequence is FAVKLACAIVLALFIGFHFQL. Over 34–37 the chain is Cytoplasmic; that stretch reads ETPR. A helical membrane pass occupies residues 38 to 58; the sequence is WAVLTAAIVAAGPAFAAGGEP. The Periplasmic portion of the chain corresponds to 59–68; that stretch reads YSGAIRYRGM. Residues 69 to 89 traverse the membrane as a helical segment; that stretch reads LRIIGTFIGCIAALIIIISMI. Residues 90-92 are Cytoplasmic-facing; the sequence is RAP. A helical transmembrane segment spans residues 93-113; it reads LLMILVCCVWAGFCTWISSLV. The Periplasmic portion of the chain corresponds to 114 to 120; sequence RIENSYA. Residues 121–141 form a helical membrane-spanning segment; that stretch reads WGLSGYTALIIVITIQTEPLL. Residues 142–151 lie on the Cytoplasmic side of the membrane; it reads TPQFALERCS. A helical membrane pass occupies residues 152–172; sequence EIVIGIGCAILADLLFSPRSI. Topologically, residues 173 to 369 are periplasmic; it reads KQEVDRELDC…RTTLSCILGT (197 aa). Residues 370-390 form a helical membrane-spanning segment; the sequence is LFWLWTGWTSGNGAMVMIAVV. Topologically, residues 391 to 406 are cytoplasmic; sequence TSLAMRLPNPRMVCID. A helical transmembrane segment spans residues 407–427; sequence FIYGTLAALPLGLLYFLVIIP. Topologically, residues 428–430 are periplasmic; that stretch reads NTQ. Residues 431–451 traverse the membrane as a helical segment; that stretch reads QSMLLLCLSLAVLGFFIGIEV. At 452-459 the chain is on the cytoplasmic side; sequence QKRRLGSM. The helical transmembrane segment at 460–480 threads the bilayer; that stretch reads GALASTINIIVLDNPMTFHFI. A topological domain (periplasmic) is located at residue glutamine 481. The chain crosses the membrane as a helical span at residues 482–502; the sequence is FLDSALGQIVGCMLAFIVILL. Topologically, residues 503 to 655 are cytoplasmic; the sequence is VRDKSKDRTG…HKYQNALTDS (153 aa).

This sequence belongs to the aromatic acid exporter ArAE (TC 2.A.85) family.

It is found in the cell inner membrane. Functionally, forms an efflux pump with AaeA. Could function as a metabolic relief valve, allowing to eliminate certain compounds when they accumulate to high levels in the cell. The polypeptide is p-hydroxybenzoic acid efflux pump subunit AaeB (Salmonella typhi).